The sequence spans 195 residues: Peptide methionine sulfoxide reductase MsrA 2 (195 aa).

Cysteine 18 is a catalytic residue.

The protein belongs to the MsrA Met sulfoxide reductase family.

The catalysed reaction is L-methionyl-[protein] + [thioredoxin]-disulfide + H2O = L-methionyl-(S)-S-oxide-[protein] + [thioredoxin]-dithiol. It carries out the reaction [thioredoxin]-disulfide + L-methionine + H2O = L-methionine (S)-S-oxide + [thioredoxin]-dithiol. In terms of biological role, has an important function as a repair enzyme for proteins that have been inactivated by oxidation. Catalyzes the reversible oxidation-reduction of methionine sulfoxide in proteins to methionine. This Mesorhizobium japonicum (strain LMG 29417 / CECT 9101 / MAFF 303099) (Mesorhizobium loti (strain MAFF 303099)) protein is Peptide methionine sulfoxide reductase MsrA 2 (msrA2).